Reading from the N-terminus, the 160-residue chain is Peptide deformylase 1 (160 aa).

Fe cation is bound by residues C90 and H132. Residue E133 is part of the active site. H136 contributes to the Fe cation binding site.

This sequence belongs to the polypeptide deformylase family. Requires Fe(2+) as cofactor.

The enzyme catalyses N-terminal N-formyl-L-methionyl-[peptide] + H2O = N-terminal L-methionyl-[peptide] + formate. Functionally, removes the formyl group from the N-terminal Met of newly synthesized proteins. Requires at least a dipeptide for an efficient rate of reaction. N-terminal L-methionine is a prerequisite for activity but the enzyme has broad specificity at other positions. The chain is Peptide deformylase 1 (defA) from Bacillus subtilis (strain 168).